We begin with the raw amino-acid sequence, 274 residues long: MGTVNITVSDGVRYAVADEGPNASEAVVCLHGFTGSKQSWTFLDEMLPDSRLIKIDCLGHGETDAPLNGKRYSTTRQVSDLAEIFDQLKLHKVKLIGYSMGGRLAYSFAMTYPERVSALVLESTTPGLKTLGERRERIMRDRKLADFILRDGLEAFVAYWENIPLFSSQQRLAEDIRYRIRSGRLRNNKIGLANSLTGMGTGSQPSLWSRVEEIDVPVLLICGEWDEKFCAINQEVHKMLPSSRIEIVPKAGHTVHVEQPRLFGKIVSEFLTSI.

In terms of domain architecture, AB hydrolase-1 spans 26–259 (AVVCLHGFTG…KAGHTVHVEQ (234 aa)).

Belongs to the AB hydrolase superfamily. MenH family. As to quaternary structure, monomer.

The enzyme catalyses 5-enolpyruvoyl-6-hydroxy-2-succinyl-cyclohex-3-ene-1-carboxylate = (1R,6R)-6-hydroxy-2-succinyl-cyclohexa-2,4-diene-1-carboxylate + pyruvate. It participates in quinol/quinone metabolism; 1,4-dihydroxy-2-naphthoate biosynthesis; 1,4-dihydroxy-2-naphthoate from chorismate: step 3/7. It functions in the pathway quinol/quinone metabolism; menaquinone biosynthesis. Functionally, catalyzes a proton abstraction reaction that results in 2,5-elimination of pyruvate from 2-succinyl-5-enolpyruvyl-6-hydroxy-3-cyclohexene-1-carboxylate (SEPHCHC) and the formation of 2-succinyl-6-hydroxy-2,4-cyclohexadiene-1-carboxylate (SHCHC). The chain is Putative 2-succinyl-6-hydroxy-2,4-cyclohexadiene-1-carboxylate synthase from Bacillus subtilis (strain 168).